The sequence spans 85 residues: HssA/B-like protein 59 (85 aa).

Belongs to the hssA/B family.

This is HssA/B-like protein 59 (hssl59) from Dictyostelium discoideum (Social amoeba).